The chain runs to 269 residues: uncharacterized protein (269 aa).

Positions 5–73 constitute an HTH gntR-type domain; sequence APKWRELADR…RGHGTVVRRK (69 aa). A DNA-binding region (H-T-H motif) is located at residues 33–52; the sequence is IRDLVEAGEGSKETVHRAYK.

In terms of biological role, the imp locus inhibits the extrachromosomal maintenance of the Streptomyces plasmid SLP1. This is an uncharacterized protein from Streptomyces coelicolor (strain ATCC BAA-471 / A3(2) / M145).